Reading from the N-terminus, the 121-residue chain is MNHAPHLYFAWQQLVEKSQLMLRLATEEQWDELIASEMAYVNAVQEIAHLTEEVAPSTTMQEQLRPMLRLILDNESKVKQLLQIRMDELAKLVGQSSVQKSVLSAYGDQGGFVLAPQDNFS.

The required for homodimerization stretch occupies residues 1–50 (MNHAPHLYFAWQQLVEKSQLMLRLATEEQWDELIASEMAYVNAVQEIAHL). Positions 60–98 (MQEQLRPMLRLILDNESKVKQLLQIRMDELAKLVGQSSV) are fliD binding.

It belongs to the FliT family. As to quaternary structure, homodimer. Interacts with FliD and FlhC.

The protein resides in the cytoplasm. The protein localises to the cytosol. Dual-function protein that regulates the transcription of class 2 flagellar operons and that also acts as an export chaperone for the filament-capping protein FliD. As a transcriptional regulator, acts as an anti-FlhDC factor; it directly binds FlhC, thus inhibiting the binding of the FlhC/FlhD complex to class 2 promoters, resulting in decreased expression of class 2 flagellar operons. As a chaperone, effects FliD transition to the membrane by preventing its premature polymerization, and by directing it to the export apparatus. The sequence is that of Flagellar protein FliT from Escherichia coli O8 (strain IAI1).